The sequence spans 500 residues: Ent-kaurene oxidase P450-4 (500 aa).

The helical transmembrane segment at 6 to 26 (VHWLIYVAFGAWLCSYVIHVL) threads the bilayer. N-linked (GlcNAc...) asparagine glycosylation is present at Asn-240. Cys-441 is a heme binding site. The N-linked (GlcNAc...) asparagine glycan is linked to Asn-475.

The protein belongs to the cytochrome P450 family. It depends on heme as a cofactor.

It is found in the membrane. It catalyses the reaction ent-kaur-16-ene + 3 reduced [NADPH--hemoprotein reductase] + 3 O2 = ent-kaur-16-en-19-oate + 3 oxidized [NADPH--hemoprotein reductase] + 4 H2O + 4 H(+). Its pathway is plant hormone biosynthesis; gibberellin biosynthesis. Functionally, ent-kaurene oxidase; part of the gene cluster that mediates the biosynthesis of gibberellins (GAs), diterpenoids that may provide a selective advantage during infection of the preferred host plant, rice. Gibberellins (GAs) are diterpenoids and are synthesized via the mevalonate pathway. Biosynthesis of the major metabolite GA3 (gibberellic acid) from geranylgeranyl diphosphate (GGPP) requires 13 steps. The GGPP produced by the geranylgeranyl diphosphate synthase GGS2 is converted to ent-kaurene via ent-copalyldiphosphate in a two-step cyclization reaction performed by the bifunctional ent-copalyl diphosphate synthase/ent-kaurene synthase enzyme (CPS/KS). Ent-Kaurene is metabolized to GAs by a series of oxidation reactions catalyzed by cytochrome P450 monooxygenases. Cytochrome P450 monooxygenase P450-4 is an ent-kaurene oxidase that catalyzes the three oxidation steps between ent-kaurene and ent-kaurenoic acid. The highly multifunctional cytochrome P450 monooxygenase P450-1 then catalyzes four steps involving oxidation at two carbon atoms, in the main pathway from ent-kaurenoic acid to GA14 via GA12-aldehyde as well as producing kaurenolides and fujenoic acids as by-products. The cytochrome P450 monooxygenase P450-2 then converts GA14 to GA4 by removal of C-20. GA4 is further converted to GA7 by the GA4 desaturase DES via 1,2-desaturation before cytochrome P450 monooxygenase P450-3, a 13-hydroxylase, hydroxylates GA7 to GA3, the final product of the GA-biosynthetic pathway. This chain is Ent-kaurene oxidase P450-4, found in Gibberella fujikuroi (strain CBS 195.34 / IMI 58289 / NRRL A-6831) (Bakanae and foot rot disease fungus).